We begin with the raw amino-acid sequence, 448 residues long: N-succinylarginine dihydrolase (448 aa).

Substrate-binding positions include 19-28 (GGLSYGNVAS), N110, and 137-138 (HR). E174 is a catalytic residue. Position 214 (R214) interacts with substrate. H250 is an active-site residue. Substrate-binding residues include D252 and N365. Residue C371 is the Nucleophile of the active site.

The protein belongs to the succinylarginine dihydrolase family. In terms of assembly, homodimer.

It catalyses the reaction N(2)-succinyl-L-arginine + 2 H2O + 2 H(+) = N(2)-succinyl-L-ornithine + 2 NH4(+) + CO2. It functions in the pathway amino-acid degradation; L-arginine degradation via AST pathway; L-glutamate and succinate from L-arginine: step 2/5. In terms of biological role, catalyzes the hydrolysis of N(2)-succinylarginine into N(2)-succinylornithine, ammonia and CO(2). This is N-succinylarginine dihydrolase from Pseudomonas fluorescens (strain ATCC BAA-477 / NRRL B-23932 / Pf-5).